We begin with the raw amino-acid sequence, 962 residues long: Glycine dehydrogenase (decarboxylating) (962 aa).

At K709 the chain carries N6-(pyridoxal phosphate)lysine.

The protein belongs to the GcvP family. In terms of assembly, the glycine cleavage system is composed of four proteins: P, T, L and H. Pyridoxal 5'-phosphate serves as cofactor.

It carries out the reaction N(6)-[(R)-lipoyl]-L-lysyl-[glycine-cleavage complex H protein] + glycine + H(+) = N(6)-[(R)-S(8)-aminomethyldihydrolipoyl]-L-lysyl-[glycine-cleavage complex H protein] + CO2. Its function is as follows. The glycine cleavage system catalyzes the degradation of glycine. The P protein binds the alpha-amino group of glycine through its pyridoxal phosphate cofactor; CO(2) is released and the remaining methylamine moiety is then transferred to the lipoamide cofactor of the H protein. The polypeptide is Glycine dehydrogenase (decarboxylating) (Shewanella sp. (strain MR-4)).